The following is an 819-amino-acid chain: Advillin (819 aa).

Positions 1–731 are core; the sequence is MSLSSAFRTV…YEQLKNELGD (731 aa). A Gelsolin-like 1 repeat occupies 24–105; the sequence is MELVLVPLSA…VQYHESDTFR (82 aa). The residue at position 85 (Tyr85) is a Phosphotyrosine. Residues 109–116 and 135–143 contribute to the a 1,2-diacyl-sn-glycero-3-phospho-(1D-myo-inositol-4,5-bisphosphate) site; these read KRGIIYKK and RLLHVKGKR. Gelsolin-like repeat units lie at residues 144–215, 265–339, 407–486, 524–592, and 631–704; these read NIRA…KEAA, TEVA…SAMF, LVPV…RHFM, NTKA…PEFW, and TEVT…PPTF. Residues 628 to 819 are required for interaction with F-actin; the sequence is FLVTEVTDFT…LQLKKEAGLF (192 aa). Residues 731–819 form a headpiece region; that stretch reads DATAIVRITT…LQLKKEAGLF (89 aa). One can recognise an HP domain in the interval 753-819; the sequence is ESGPKYYPVE…LQLKKEAGLF (67 aa). Tyr758 is modified (phosphotyrosine).

This sequence belongs to the villin/gelsolin family. In terms of assembly, associates (via C-terminus) with actin. Interacts with F-actin. Interacts with SCARF1; the interaction occurs in embryonic dorsal root ganglions at 18 dpc and induces neurite-like outgrowth. Interacts with PLCE1. Interacts with ACTR2 and ACTR3; associates with the ARP2/3 complex. As to expression, expressed in dorsal root ganglion (DRG) neurons and superior cervical ganglia (SCG). Expressed in podocytes.

It is found in the cytoplasm. The protein localises to the cytoskeleton. Its subcellular location is the cell projection. The protein resides in the neuron projection. It localises to the axon. It is found in the lamellipodium. The protein localises to the cell junction. Its subcellular location is the focal adhesion. Its function is as follows. Ca(2+)-regulated actin-binding protein which plays an important role in actin bundling. May have a unique function in the morphogenesis of neuronal cells which form ganglia. Required for SREC1-mediated regulation of neurite-like outgrowth. Plays a role in regenerative sensory axon outgrowth and remodeling processes after peripheral injury in neonates. Involved in the formation of long fine actin-containing filopodia-like structures in fibroblast. Plays a role in ciliogenesis. In podocytes, controls lamellipodia formation through the regulation of EGF-induced diacylglycerol generation by PLCE1 and ARP2/3 complex assembly. This chain is Advillin, found in Rattus norvegicus (Rat).